Here is a 101-residue protein sequence, read N- to C-terminus: Large ribosomal subunit protein uL23 (101 aa).

Belongs to the universal ribosomal protein uL23 family. Part of the 50S ribosomal subunit. Contacts protein L29, and trigger factor when it is bound to the ribosome.

Functionally, one of the early assembly proteins it binds 23S rRNA. One of the proteins that surrounds the polypeptide exit tunnel on the outside of the ribosome. Forms the main docking site for trigger factor binding to the ribosome. The chain is Large ribosomal subunit protein uL23 from Nocardia farcinica (strain IFM 10152).